We begin with the raw amino-acid sequence, 148 residues long: Deoxyuridine 5'-triphosphate nucleotidohydrolase (148 aa).

Residues 68–70, asparagine 81, 85–87, and lysine 95 contribute to the substrate site; these read RSG and TID.

The protein belongs to the dUTPase family. The cofactor is Mg(2+).

The catalysed reaction is dUTP + H2O = dUMP + diphosphate + H(+). It functions in the pathway pyrimidine metabolism; dUMP biosynthesis; dUMP from dCTP (dUTP route): step 2/2. This enzyme is involved in nucleotide metabolism: it produces dUMP, the immediate precursor of thymidine nucleotides and it decreases the intracellular concentration of dUTP so that uracil cannot be incorporated into DNA. This Rickettsia felis (strain ATCC VR-1525 / URRWXCal2) (Rickettsia azadi) protein is Deoxyuridine 5'-triphosphate nucleotidohydrolase.